Here is an 84-residue protein sequence, read N- to C-terminus: Kunitz-type neurotoxin MitTx-alpha (84 aa).

Residues 1–24 (MSSGGLLLLLGLLTLCAELTPVSS) form the signal peptide. Glutamine 25 carries the pyrrolidone carboxylic acid modification. The region spanning 31 to 82 (CYEDPPFFQKCGAFVDSYYFNRSRITCVHFFYGQCDVNQNHFTTMSECNRVC) is the BPTI/Kunitz inhibitor domain. Intrachain disulfides connect cysteine 31–cysteine 82, cysteine 41–cysteine 65, and cysteine 57–cysteine 78.

It belongs to the venom Kunitz-type family. Heterodimer of an alpha (Kunitz-type) and a beta (phospholipase A2 homolog) chains; non-covalently-linked. Expressed by the venom gland.

The protein localises to the secreted. Its function is as follows. MitTx, a heteromeric complex between Kunitz- and phospholipase-A2-like proteins, potently, persistently and selectively activates rat and chicken acid-sensing ion channel ASIC1. Both alternatively spliced rat isoforms ASIC1a and ASIC1b are activated, with a higher potency for ASIC1a (EC(50)=9.4 nM) vs ASIC1b (EC(50)=23 nM). The rat ASIC3 subtype is also sensitive to the heterodimer, but with a lower potency (EC(50)=830 nM). On rat ASIC2a, the toxin shows a very weak activation, but produces a remarkable potentiation (&gt;100-fold) of protons when the extracellular pH drops below neutrality. Moderate and weak activations are also observed on the heterotrimers Asic1a-Asic2a and Asic1a-Asic3 (expressed in CHO cells), respectively. The binding sites of the beta subunit of MitTx and the spider psalmotoxin-1 overlap, explaining why these toxins are mutually exclusive. In vivo, the heterodimer elicits robust pain-related behavior in mice by activation of ASIC1 channels on capsaicin-sensitive nerve fibers. The sequence is that of Kunitz-type neurotoxin MitTx-alpha from Micrurus tener tener (Texas coral snake).